Consider the following 251-residue polypeptide: Cell division protein ZapD (251 aa).

Belongs to the ZapD family. As to quaternary structure, interacts with FtsZ.

It localises to the cytoplasm. Its function is as follows. Cell division factor that enhances FtsZ-ring assembly. Directly interacts with FtsZ and promotes bundling of FtsZ protofilaments, with a reduction in FtsZ GTPase activity. In Burkholderia ambifaria (strain MC40-6), this protein is Cell division protein ZapD.